The primary structure comprises 252 residues: uncharacterized protein (252 aa).

This sequence belongs to the methyltransferase superfamily.

This is an uncharacterized protein from Mycobacterium sp. (strain KMS).